Here is a 320-residue protein sequence, read N- to C-terminus: Glutathione synthetase (320 aa).

Residues 127-312 (KLAITEFPRF…VAGLMIDALE (186 aa)) enclose the ATP-grasp domain. 153–209 (LAEHEDIILKPLDGMGGAGIFRIQNTDHNIGVIIETLTRYGTRTIMAQRFLPEIREG) provides a ligand contact to ATP. Positions 283 and 285 each coordinate Mg(2+).

The protein belongs to the prokaryotic GSH synthase family. Mg(2+) serves as cofactor. It depends on Mn(2+) as a cofactor.

It catalyses the reaction gamma-L-glutamyl-L-cysteine + glycine + ATP = glutathione + ADP + phosphate + H(+). It functions in the pathway sulfur metabolism; glutathione biosynthesis; glutathione from L-cysteine and L-glutamate: step 2/2. The chain is Glutathione synthetase from Nitrosomonas europaea (strain ATCC 19718 / CIP 103999 / KCTC 2705 / NBRC 14298).